The primary structure comprises 44 residues: Photosystem I reaction center subunit IX (44 aa).

The chain crosses the membrane as a helical span at residues 7–27 (YLSVAPVLSTLWFGALAGLLI).

Belongs to the PsaJ family.

Its subcellular location is the plastid. It localises to the chloroplast thylakoid membrane. In terms of biological role, may help in the organization of the PsaE and PsaF subunits. This Solanum bulbocastanum (Wild potato) protein is Photosystem I reaction center subunit IX.